Consider the following 404-residue polypeptide: Pyrophosphate--fructose 6-phosphate 1-phosphotransferase (404 aa).

Residue Gly13 coordinates diphosphate. Position 108 (Asn108) interacts with Mg(2+). Substrate-binding positions include 136 to 138 (TID), 180 to 182 (MGR), Glu237, and 295 to 298 (YLQR). The active-site Proton acceptor is the Asp138.

Belongs to the phosphofructokinase type A (PFKA) family. PPi-dependent PFK group II subfamily. Clade 'B2' sub-subfamily. In terms of assembly, homodimer. Requires Mg(2+) as cofactor.

The protein resides in the cytoplasm. The enzyme catalyses beta-D-fructose 6-phosphate + diphosphate = beta-D-fructose 1,6-bisphosphate + phosphate + H(+). It functions in the pathway carbohydrate degradation; glycolysis; D-glyceraldehyde 3-phosphate and glycerone phosphate from D-glucose: step 3/4. Its activity is regulated as follows. Non-allosteric. Catalyzes the phosphorylation of D-fructose 6-phosphate, the first committing step of glycolysis. Uses inorganic phosphate (PPi) as phosphoryl donor instead of ATP like common ATP-dependent phosphofructokinases (ATP-PFKs), which renders the reaction reversible, and can thus function both in glycolysis and gluconeogenesis. Consistently, PPi-PFK can replace the enzymes of both the forward (ATP-PFK) and reverse (fructose-bisphosphatase (FBPase)) reactions. The polypeptide is Pyrophosphate--fructose 6-phosphate 1-phosphotransferase (Rhodospirillum rubrum (strain ATCC 11170 / ATH 1.1.1 / DSM 467 / LMG 4362 / NCIMB 8255 / S1)).